A 66-amino-acid polypeptide reads, in one-letter code: Large ribosomal subunit protein uL29 (66 aa).

Belongs to the universal ribosomal protein uL29 family.

The polypeptide is Large ribosomal subunit protein uL29 (Bartonella quintana (strain Toulouse) (Rochalimaea quintana)).